An 840-amino-acid chain; its full sequence is Telomere length regulation protein TEL2 homolog (840 aa).

The residue at position 1 (M1) is an N-acetylmethionine. Hydroxyproline occurs at positions 374, 419, and 422. A disordered region spans residues 443-497; it reads PEPAGDCSSVSRGPSPAPVDTESPVEMPEKAVESDVPPTQPQGSDSELDSDDEFI. The residue at position 457 (S457) is a Phosphoserine. Residue S486 is modified to Phosphoserine; by CK2. S488, S492, and S837 each carry phosphoserine. Residues 488 to 497 are compositionally biased toward acidic residues; the sequence is SELDSDDEFI.

It belongs to the TEL2 family. Component of the TTT complex composed of TELO2, TTI1 and TTI2. Interacts with ATM, ATR, MTOR, PRKDC, RUVBL2, TTI1, TTI2, SMG1 and TRRAP. Component of the mTORC1 and mTORC2 complexes. Interacts (phosphorylated form) with PIH1D1. Interaction with PIH1D1 mediates interaction of TELO2 with the R2TP complex composed of RUVBL1, RUVBL2, PIH1D1, and RPAP3. In terms of processing, hydroxylation by PHD3 is required for a proper interaction with ATR, and activation of the ATR/CHK1/p53 pathway following DNA damage. Post-translationally, phosphorylated at Ser-486 by CK2 following growth factor deprivation, leading to its subsequent ubiquitination by the SCF(FBXO9) complex. Phosphorylation by CK2 only takes place when TELO2 is bound to mTORC1, not mTORC2; leading to selective ubiquitination of mTORC1-associated protein. Ubiquitinated by the SCF(FBXO9) complex following phosphorylation by CK2 in response to growth factor deprivation, leading to its degradation by the proteasome. Only mTORC1-associated protein is ubiquitinated and degraded, leading to selective inactivation of mTORC1 to restrain cell growth and protein translation, while mTORC2 is activated due to the relief of feedback inhibition by mTORC1.

Its subcellular location is the cytoplasm. It localises to the membrane. It is found in the nucleus. The protein resides in the chromosome. The protein localises to the telomere. In terms of biological role, regulator of the DNA damage response (DDR). Part of the TTT complex that is required to stabilize protein levels of the phosphatidylinositol 3-kinase-related protein kinase (PIKK) family proteins. The TTT complex is involved in the cellular resistance to DNA damage stresses, like ionizing radiation (IR), ultraviolet (UV) and mitomycin C (MMC). Together with the TTT complex and HSP90 may participate in the proper folding of newly synthesized PIKKs. Promotes assembly, stabilizes and maintains the activity of mTORC1 and mTORC2 complexes, which regulate cell growth and survival in response to nutrient and hormonal signals. May be involved in telomere length regulation. The protein is Telomere length regulation protein TEL2 homolog (Telo2) of Mus musculus (Mouse).